A 1219-amino-acid chain; its full sequence is N-acetylglucosamine-1-phosphotransferase subunits alpha/beta (1219 aa).

The helical transmembrane segment at 27–47 (LCFGGLVLMIVSAFQFGEVVV) threads the bilayer. Residues Asn-88, Asn-119, Asn-153, Asn-292, and Asn-381 are each glycosylated (N-linked (GlcNAc...) asparagine). Intrachain disulfides connect Cys-443-Cys-466, Cys-457-Cys-473, Cys-508-Cys-531, and Cys-522-Cys-538. 2 LNR repeats span residues 443 to 478 (CAEG…GSSR) and 508 to 538 (CNQG…VGDC). Asp-454 provides a ligand contact to Ca(2+). A glycan (N-linked (GlcNAc...) asparagine) is linked at Asn-462. Asp-469, Asp-472, Asp-519, Asp-534, and Asp-537 together coordinate Ca(2+). 8 N-linked (GlcNAc...) asparagine glycosylation sites follow: Asn-554, Asn-610, Asn-617, Asn-645, Asn-696, Asn-726, Asn-823, and Asn-974. Residues 640–666 (ELPKSNTSTPVRDKEEEPKPTVATPEP) form a disordered region. One can recognise a DMAP1-binding domain in the interval 696–804 (NETLLPDEVK…DDVTTKAQSR (109 aa)). The 36-residue stretch at 970-1005 (VQQLNISEVFDEIDTDHSGVLSDREIRTLATRIHEL) folds into the EF-hand domain. The Ca(2+) site is built by Asp-983, Asp-985, Ser-987, and Glu-994. 3 N-linked (GlcNAc...) asparagine glycosylation sites follow: Asn-1021, Asn-1029, and Asn-1094. Residues 1180–1200 (VLVTLVVFTVMSFFAEQLVML) traverse the membrane as a helical segment.

Belongs to the stealth family. Hexamer of two alpha, two beta and two gamma (GNPTG) subunits; disulfide-linked. The alpha and/or the beta subunits of the enzyme constitute the catalytic subunits. Post-translationally, the alpha- and beta-subunits are generated by a proteolytic cleavage by mbtps1 protease at the Gln-893-Asp-894 bond.

Its subcellular location is the golgi apparatus membrane. The catalysed reaction is N(4)-[alpha-D-mannosyl-(1-&gt;2)-alpha-D-mannosyl-(glycan)]-L-asparaginyl-[protein] + UDP-N-acetyl-alpha-D-glucosamine = N(4)-[6-(N-acetyl-alpha-D-glucosaminyl-1-phospho)-alpha-D-mannosyl-(1-&gt;2)-alpha-D-mannosyl-(glycan)]-L-asparaginyl-[protein] + UMP + H(+). Functionally, catalyzes the formation of mannose 6-phosphate (M6P) markers on high mannose type oligosaccharides in the Golgi apparatus. M6P residues are required to bind to the M6P receptors (MPR), which mediate the vesicular transport of lysosomal enzymes to the endosomal/prelysosomal compartment. This is N-acetylglucosamine-1-phosphotransferase subunits alpha/beta (gnptab) from Danio rerio (Zebrafish).